Reading from the N-terminus, the 231-residue chain is Putative 3-methyladenine DNA glycosylase (231 aa).

It belongs to the DNA glycosylase MPG family.

The polypeptide is Putative 3-methyladenine DNA glycosylase (Pseudomonas fluorescens (strain Pf0-1)).